The sequence spans 296 residues: Cytidine deaminase (296 aa).

CMP/dCMP-type deaminase domains follow at residues 47–167 and 186–296; these read TESE…FGPK and DSSD…VDPI. 88–90 is a substrate binding site; the sequence is NLE. A Zn(2+)-binding site is contributed by His-101. Glu-103 serves as the catalytic Proton donor. Zn(2+) is bound by residues Cys-128 and Cys-131.

The protein belongs to the cytidine and deoxycytidylate deaminase family. As to quaternary structure, homodimer. Zn(2+) is required as a cofactor.

It carries out the reaction cytidine + H2O + H(+) = uridine + NH4(+). It catalyses the reaction 2'-deoxycytidine + H2O + H(+) = 2'-deoxyuridine + NH4(+). Functionally, this enzyme scavenges exogenous and endogenous cytidine and 2'-deoxycytidine for UMP synthesis. This is Cytidine deaminase from Shewanella oneidensis (strain ATCC 700550 / JCM 31522 / CIP 106686 / LMG 19005 / NCIMB 14063 / MR-1).